Consider the following 394-residue polypeptide: Flagellin A (394 aa).

It belongs to the bacterial flagellin family.

The protein localises to the secreted. It localises to the bacterial flagellum. Flagellin is the subunit protein which polymerizes to form the filaments of bacterial flagella. Homomer of FlaA is able to form a functional filament. In Rhizobium meliloti (strain 1021) (Ensifer meliloti), this protein is Flagellin A (flaA).